Consider the following 494-residue polypeptide: Cytochrome P450 2G1 (494 aa).

Cys439 is a binding site for heme.

This sequence belongs to the cytochrome P450 family. It depends on heme as a cofactor. As to expression, olfactory epithelium.

It localises to the endoplasmic reticulum membrane. It is found in the microsome membrane. It catalyses the reaction an organic molecule + reduced [NADPH--hemoprotein reductase] + O2 = an alcohol + oxidized [NADPH--hemoprotein reductase] + H2O + H(+). Its function is as follows. Cytochromes P450 are a group of heme-thiolate monooxygenases. This isozyme seems to be implicated in olfaction. In Oryctolagus cuniculus (Rabbit), this protein is Cytochrome P450 2G1 (CYP2G1).